The sequence spans 209 residues: Glycerol-3-phosphate acyltransferase (209 aa).

The next 5 membrane-spanning stretches (helical) occupy residues 5–25 (IIGMIIIAYLLGSIPTGLWIG), 50–70 (LGFKAGVVVLFIDILKGTLAA), 74–94 (YFLGISGTVNPLLIGLFASLG), 115–135 (ILLAYNPLLFVVACLIFIFVL), and 151–171 (AIFIIALFIHAWILAIVAGIL).

It belongs to the PlsY family. Probably interacts with PlsX.

It localises to the cell membrane. It carries out the reaction an acyl phosphate + sn-glycerol 3-phosphate = a 1-acyl-sn-glycero-3-phosphate + phosphate. It participates in lipid metabolism; phospholipid metabolism. Its function is as follows. Catalyzes the transfer of an acyl group from acyl-phosphate (acyl-PO(4)) to glycerol-3-phosphate (G3P) to form lysophosphatidic acid (LPA). This enzyme utilizes acyl-phosphate as fatty acyl donor, but not acyl-CoA or acyl-ACP. The sequence is that of Glycerol-3-phosphate acyltransferase from Limosilactobacillus reuteri (strain DSM 20016) (Lactobacillus reuteri).